We begin with the raw amino-acid sequence, 466 residues long: UDP-N-acetylmuramate--L-alanine ligase (466 aa).

Residue G119–T125 participates in ATP binding.

Belongs to the MurCDEF family.

It localises to the cytoplasm. The enzyme catalyses UDP-N-acetyl-alpha-D-muramate + L-alanine + ATP = UDP-N-acetyl-alpha-D-muramoyl-L-alanine + ADP + phosphate + H(+). It functions in the pathway cell wall biogenesis; peptidoglycan biosynthesis. In terms of biological role, cell wall formation. The protein is UDP-N-acetylmuramate--L-alanine ligase of Cytophaga hutchinsonii (strain ATCC 33406 / DSM 1761 / CIP 103989 / NBRC 15051 / NCIMB 9469 / D465).